Reading from the N-terminus, the 245-residue chain is Pyridoxine 5'-phosphate synthase (245 aa).

Asparagine 7 provides a ligand contact to 3-amino-2-oxopropyl phosphate. 9-10 (DH) lines the 1-deoxy-D-xylulose 5-phosphate pocket. 3-amino-2-oxopropyl phosphate is bound at residue arginine 18. Histidine 43 serves as the catalytic Proton acceptor. Residues arginine 45 and histidine 50 each contribute to the 1-deoxy-D-xylulose 5-phosphate site. The active-site Proton acceptor is the glutamate 70. Residue threonine 100 coordinates 1-deoxy-D-xylulose 5-phosphate. The Proton donor role is filled by histidine 190. Residues glycine 191 and 212–213 (GH) contribute to the 3-amino-2-oxopropyl phosphate site.

It belongs to the PNP synthase family. In terms of assembly, homooctamer; tetramer of dimers.

It localises to the cytoplasm. The catalysed reaction is 3-amino-2-oxopropyl phosphate + 1-deoxy-D-xylulose 5-phosphate = pyridoxine 5'-phosphate + phosphate + 2 H2O + H(+). It participates in cofactor biosynthesis; pyridoxine 5'-phosphate biosynthesis; pyridoxine 5'-phosphate from D-erythrose 4-phosphate: step 5/5. Its function is as follows. Catalyzes the complicated ring closure reaction between the two acyclic compounds 1-deoxy-D-xylulose-5-phosphate (DXP) and 3-amino-2-oxopropyl phosphate (1-amino-acetone-3-phosphate or AAP) to form pyridoxine 5'-phosphate (PNP) and inorganic phosphate. The polypeptide is Pyridoxine 5'-phosphate synthase (Prochlorococcus marinus (strain NATL2A)).